The following is a 262-amino-acid chain: Pyridoxine 5'-phosphate synthase (262 aa).

N6 lines the 3-amino-2-oxopropyl phosphate pocket. 8–9 (DH) serves as a coordination point for 1-deoxy-D-xylulose 5-phosphate. Residue R17 coordinates 3-amino-2-oxopropyl phosphate. The Proton acceptor role is filled by H42. 1-deoxy-D-xylulose 5-phosphate-binding residues include R44 and H49. The active-site Proton acceptor is E69. 1-deoxy-D-xylulose 5-phosphate is bound at residue T99. H213 acts as the Proton donor in catalysis. 3-amino-2-oxopropyl phosphate is bound by residues G214 and 235-236 (GH).

The protein belongs to the PNP synthase family. In terms of assembly, homooctamer; tetramer of dimers.

It localises to the cytoplasm. The catalysed reaction is 3-amino-2-oxopropyl phosphate + 1-deoxy-D-xylulose 5-phosphate = pyridoxine 5'-phosphate + phosphate + 2 H2O + H(+). It participates in cofactor biosynthesis; pyridoxine 5'-phosphate biosynthesis; pyridoxine 5'-phosphate from D-erythrose 4-phosphate: step 5/5. Catalyzes the complicated ring closure reaction between the two acyclic compounds 1-deoxy-D-xylulose-5-phosphate (DXP) and 3-amino-2-oxopropyl phosphate (1-amino-acetone-3-phosphate or AAP) to form pyridoxine 5'-phosphate (PNP) and inorganic phosphate. The sequence is that of Pyridoxine 5'-phosphate synthase from Wolinella succinogenes (strain ATCC 29543 / DSM 1740 / CCUG 13145 / JCM 31913 / LMG 7466 / NCTC 11488 / FDC 602W) (Vibrio succinogenes).